We begin with the raw amino-acid sequence, 125 residues long: Glycine cleavage system H protein (125 aa).

The region spanning 19–101 (IATIGITDYA…MGDGWFIKLR (83 aa)) is the Lipoyl-binding domain. The residue at position 60 (lysine 60) is an N6-lipoyllysine.

This sequence belongs to the GcvH family. The glycine cleavage system is composed of four proteins: P, T, L and H. (R)-lipoate is required as a cofactor.

Functionally, the glycine cleavage system catalyzes the degradation of glycine. The H protein shuttles the methylamine group of glycine from the P protein to the T protein. The chain is Glycine cleavage system H protein from Parvibaculum lavamentivorans (strain DS-1 / DSM 13023 / NCIMB 13966).